Consider the following 493-residue polypeptide: Guanosine-5'-triphosphate,3'-diphosphate pyrophosphatase (493 aa).

The protein belongs to the GppA/Ppx family. GppA subfamily.

The catalysed reaction is guanosine 3'-diphosphate 5'-triphosphate + H2O = guanosine 3',5'-bis(diphosphate) + phosphate + H(+). Its pathway is purine metabolism; ppGpp biosynthesis; ppGpp from GTP: step 2/2. Functionally, catalyzes the conversion of pppGpp to ppGpp. Guanosine pentaphosphate (pppGpp) is a cytoplasmic signaling molecule which together with ppGpp controls the 'stringent response', an adaptive process that allows bacteria to respond to amino acid starvation, resulting in the coordinated regulation of numerous cellular activities. The polypeptide is Guanosine-5'-triphosphate,3'-diphosphate pyrophosphatase (Salmonella heidelberg (strain SL476)).